Consider the following 65-residue polypeptide: Large ribosomal subunit protein bL35 (65 aa).

This sequence belongs to the bacterial ribosomal protein bL35 family.

The protein is Large ribosomal subunit protein bL35 of Borrelia turicatae (strain 91E135).